The chain runs to 311 residues: ATP synthase gamma chain (311 aa).

Cysteines 67 and 138 form a disulfide.

It belongs to the ATPase gamma chain family. F-type ATPases have 2 components, CF(1) - the catalytic core - and CF(0) - the membrane proton channel. CF(1) has five subunits: alpha(3), beta(3), gamma(1), delta(1), epsilon(1). CF(0) has three main subunits: a, b and c.

It is found in the cellular thylakoid membrane. With respect to regulation, thiol-modulation by raising the activation threshold of the enzyme upon oxidation of the cysteines, thereby preventing wasteful ATP-hydrolysis. In terms of biological role, produces ATP from ADP in the presence of a proton gradient across the membrane. The gamma chain is believed to be important in regulating ATPase activity and the flow of protons through the CF(0) complex. The chain is ATP synthase gamma chain (atpG) from Arthrospira platensis (Spirulina platensis).